A 380-amino-acid chain; its full sequence is Probable inactive dehydrogenase easA (380 aa).

Residues 25 to 27 (PMT), A60, Q102, and H171 contribute to the FMN site. H171 and N174 together coordinate substrate. FMN is bound by residues K223, G299, 324–325 (GR), and R325. Y352 serves as a coordination point for substrate.

The protein belongs to the NADH:flavin oxidoreductase/NADH oxidase family.

Functionally, probable inactive dehydrogenase; part of the gene cluster that mediates the biosynthesis of fungal ergot alkaloid. DmaW catalyzes the first step of ergot alkaloid biosynthesis by condensing dimethylallyl diphosphate (DMAP) and tryptophan to form 4-dimethylallyl-L-tryptophan. The second step is catalyzed by the methyltransferase easF that methylates 4-dimethylallyl-L-tryptophan in the presence of S-adenosyl-L-methionine, resulting in the formation of 4-dimethylallyl-L-abrine. The catalase easC and the FAD-dependent oxidoreductase easE then transform 4-dimethylallyl-L-abrine to chanoclavine-I which is further oxidized by easD in the presence of NAD(+), resulting in the formation of chanoclavine-I aldehyde. Agroclavine dehydrogenase easG then mediates the conversion of chanoclavine-I aldehyde to agroclavine via a non-enzymatic adduct reaction: the substrate is an iminium intermediate that is formed spontaneously from chanoclavine-I aldehyde in the presence of glutathione. The presence of easA is not required to complete this reaction. Further conversion of agroclavine to paspalic acid is a two-step process involving oxidation of agroclavine to elymoclavine and of elymoclavine to paspalic acid, the second step being performed by the elymoclavine oxidase cloA. Paspalic acid is then further converted to D-lysergic acid. Ergopeptines are assembled from D-lysergic acid and three different amino acids by the D-lysergyl-peptide-synthetases composed each of a monomudular and a trimodular nonribosomal peptide synthetase subunit. LpsB and lpsC encode the monomodular subunits responsible for D-lysergic acid activation and incorporation into the ergopeptine backbone. LpsA1 and A2 subunits encode the trimodular nonribosomal peptide synthetase assembling the tripeptide portion of ergopeptines. LpsA1 is responsible for formation of the major ergopeptine, ergotamine, and lpsA2 for alpha-ergocryptine, the minor ergopeptine of the total alkaloid mixture elaborated by C.purpurea. D-lysergyl-tripeptides are assembled by the nonribosomal peptide synthetases and released as N-(D-lysergyl-aminoacyl)-lactams. Cyclolization of the D-lysergyl-tripeptides is performed by the Fe(2+)/2-ketoglutarate-dependent dioxygenase easH which introduces a hydroxyl group into N-(D-lysergyl-aminoacyl)-lactam at alpha-C of the aminoacyl residue followed by spontaneous condensation with the terminal lactam carbonyl group. This chain is Probable inactive dehydrogenase easA, found in Claviceps purpurea (strain 20.1) (Ergot fungus).